A 407-amino-acid polypeptide reads, in one-letter code: Bifunctional enzyme IspD/IspF (407 aa).

Residues 1–247 (MVHIQADGAR…RLSHNALPDV (247 aa)) are 2-C-methyl-D-erythritol 4-phosphate cytidylyltransferase. The tract at residues 248–407 (RTGNGYDVHQ…ATVVFQGKPQ (160 aa)) is 2-C-methyl-D-erythritol 2,4-cyclodiphosphate synthase. The a divalent metal cation site is built by aspartate 254 and histidine 256. Residues 254–256 (DVH) and 280–281 (HS) contribute to the 4-CDP-2-C-methyl-D-erythritol 2-phosphate site. Histidine 288 contributes to the a divalent metal cation binding site. 4-CDP-2-C-methyl-D-erythritol 2-phosphate contacts are provided by residues 302-304 (DIG), 378-381 (TTNE), phenylalanine 385, and arginine 388.

It in the N-terminal section; belongs to the IspD/TarI cytidylyltransferase family. IspD subfamily. In the C-terminal section; belongs to the IspF family. A divalent metal cation is required as a cofactor.

It carries out the reaction 2-C-methyl-D-erythritol 4-phosphate + CTP + H(+) = 4-CDP-2-C-methyl-D-erythritol + diphosphate. It catalyses the reaction 4-CDP-2-C-methyl-D-erythritol 2-phosphate = 2-C-methyl-D-erythritol 2,4-cyclic diphosphate + CMP. It functions in the pathway isoprenoid biosynthesis; isopentenyl diphosphate biosynthesis via DXP pathway; isopentenyl diphosphate from 1-deoxy-D-xylulose 5-phosphate: step 2/6. It participates in isoprenoid biosynthesis; isopentenyl diphosphate biosynthesis via DXP pathway; isopentenyl diphosphate from 1-deoxy-D-xylulose 5-phosphate: step 4/6. Functionally, bifunctional enzyme that catalyzes the formation of 4-diphosphocytidyl-2-C-methyl-D-erythritol from CTP and 2-C-methyl-D-erythritol 4-phosphate (MEP) (IspD), and catalyzes the conversion of 4-diphosphocytidyl-2-C-methyl-D-erythritol 2-phosphate (CDP-ME2P) to 2-C-methyl-D-erythritol 2,4-cyclodiphosphate (ME-CPP) with a corresponding release of cytidine 5-monophosphate (CMP) (IspF). The polypeptide is Bifunctional enzyme IspD/IspF (Allorhizobium ampelinum (strain ATCC BAA-846 / DSM 112012 / S4) (Agrobacterium vitis (strain S4))).